Reading from the N-terminus, the 33-residue chain is Neutrophil defensin 3 (33 aa).

3 disulfide bridges follow: Cys3–Cys31, Cys5–Cys20, and Cys10–Cys30.

Belongs to the alpha-defensin family.

The protein resides in the secreted. In terms of biological role, anti-fungal and bactericidal activity, greater against Gram-positive bacteria. In Mesocricetus auratus (Golden hamster), this protein is Neutrophil defensin 3.